Reading from the N-terminus, the 157-residue chain is tRNA (cytidine(34)-2'-O)-methyltransferase (157 aa).

S-adenosyl-L-methionine is bound by residues Leu78, Gly100, Ile122, and Ser130.

It belongs to the class IV-like SAM-binding methyltransferase superfamily. RNA methyltransferase TrmH family. TrmL subfamily. Homodimer.

It is found in the cytoplasm. It carries out the reaction cytidine(34) in tRNA + S-adenosyl-L-methionine = 2'-O-methylcytidine(34) in tRNA + S-adenosyl-L-homocysteine + H(+). The catalysed reaction is 5-carboxymethylaminomethyluridine(34) in tRNA(Leu) + S-adenosyl-L-methionine = 5-carboxymethylaminomethyl-2'-O-methyluridine(34) in tRNA(Leu) + S-adenosyl-L-homocysteine + H(+). Its function is as follows. Methylates the ribose at the nucleotide 34 wobble position in the two leucyl isoacceptors tRNA(Leu)(CmAA) and tRNA(Leu)(cmnm5UmAA). Catalyzes the methyl transfer from S-adenosyl-L-methionine to the 2'-OH of the wobble nucleotide. The sequence is that of tRNA (cytidine(34)-2'-O)-methyltransferase from Escherichia coli O6:H1 (strain CFT073 / ATCC 700928 / UPEC).